The chain runs to 402 residues: Queuine tRNA-ribosyltransferase-like protein (402 aa).

This sequence belongs to the queuine tRNA-ribosyltransferase family.

This is Queuine tRNA-ribosyltransferase-like protein from Theileria parva (East coast fever infection agent).